The sequence spans 201 residues: Small ribosomal subunit protein uS4c (201 aa).

One can recognise an S4 RNA-binding domain in the interval 89–152 (MRLDNILFRL…NSRTLVQNLL (64 aa)).

This sequence belongs to the universal ribosomal protein uS4 family. In terms of assembly, part of the 30S ribosomal subunit. Contacts protein S5. The interaction surface between S4 and S5 is involved in control of translational fidelity.

It localises to the plastid. Its subcellular location is the chloroplast. Its function is as follows. One of the primary rRNA binding proteins, it binds directly to 16S rRNA where it nucleates assembly of the body of the 30S subunit. With S5 and S12 plays an important role in translational accuracy. The protein is Small ribosomal subunit protein uS4c (rps4) of Olimarabidopsis pumila (Dwarf rocket).